The sequence spans 582 residues: Protein NUCLEAR FUSION DEFECTIVE 4 (582 aa).

The tract at residues 1 to 20 is disordered; sequence MRPRIRDVSDKLRPNRASFD. A run of 8 helical transmembrane segments spans residues 46–66, 100–120, 132–152, 172–192, 202–222, 243–263, 270–290, and 358–378; these read VLVAAIWIQASTGTNFDFSAY, IALGYFPLSVVLFAAAAMGFV, IITLPYSLVFLCCLLAGLSIC, LALSLTVSFNGISAALYSLAF, LYLLLNSLVPLVVSFAALYPV, VFTILNVLAVITSFHLLLSSS, LNFIGAVVLLVFPLCAPLLVY, and LEFWLYYIAYFCGGTIGLVYS. A glycan (N-linked (GlcNAc...) asparagine) is linked at N391. Helical transmembrane passes span 395-412, 425-445, 458-478, 489-509, and 536-556; these read LVTIYSSFSFFGRLLSAA, TGWFAIALLPTPIAFFLLAVS, LIGLSSGFIFAAAVSITSDLF, ILITNIPIGSLLYGYIAASIY, and TFVFWGCLSILGVVSSLSLYI.

It localises to the membrane. Functionally, required for karyogamy during female gametophyte development, when the two polar nuclei fuse to form the diploid central cell nucleus. This chain is Protein NUCLEAR FUSION DEFECTIVE 4, found in Arabidopsis thaliana (Mouse-ear cress).